The sequence spans 387 residues: Small ribosomal subunit protein mS31 (387 aa).

Residues 1–56 (MLHRIPAFIRPRPFSGLPLSCGNREVSVAASVLPAAGSGAVRTENTIQRHFCTSRS) constitute a mitochondrion transit peptide. Disordered regions lie at residues 59 to 83 (SKKDDQSVPANETSQKAAESQGEGK) and 203 to 228 (KSPSMRVSSRPQHQIQFDEEVDSSLS). Polar residues-rich tracts occupy residues 66-76 (VPANETSQKAA) and 207-217 (MRVSSRPQHQI).

It belongs to the mitochondrion-specific ribosomal protein mS31 family. In terms of assembly, component of the mitochondrial ribosome small subunit (28S) which comprises a 12S rRNA and about 30 distinct proteins.

It is found in the mitochondrion. This chain is Small ribosomal subunit protein mS31 (Mrps31), found in Rattus norvegicus (Rat).